Reading from the N-terminus, the 248-residue chain is tRNA1(Val) (adenine(37)-N6)-methyltransferase (248 aa).

Belongs to the methyltransferase superfamily. tRNA (adenine-N(6)-)-methyltransferase family.

The protein resides in the cytoplasm. The catalysed reaction is adenosine(37) in tRNA1(Val) + S-adenosyl-L-methionine = N(6)-methyladenosine(37) in tRNA1(Val) + S-adenosyl-L-homocysteine + H(+). Functionally, specifically methylates the adenine in position 37 of tRNA(1)(Val) (anticodon cmo5UAC). The polypeptide is tRNA1(Val) (adenine(37)-N6)-methyltransferase (Yersinia pseudotuberculosis serotype O:1b (strain IP 31758)).